Reading from the N-terminus, the 285-residue chain is Phosphatidylglycerol--prolipoprotein diacylglyceryl transferase (285 aa).

A run of 5 helical transmembrane segments spans residues 17–37 (ALGL…GLTL), 43–63 (WYAL…LFLL), 78–98 (LVFW…VLFY), 113–133 (WEGG…IWWV), and 139–159 (LSWL…LFLG). Arginine 160 is an a 1,2-diacyl-sn-glycero-3-phospho-(1'-sn-glycerol) binding site. 3 helical membrane passes run 195-215 (LYEA…QFFA), 223-243 (GKLA…VEWF), and 256-276 (GLTM…WLII).

Belongs to the Lgt family.

The protein resides in the cell inner membrane. The catalysed reaction is L-cysteinyl-[prolipoprotein] + a 1,2-diacyl-sn-glycero-3-phospho-(1'-sn-glycerol) = an S-1,2-diacyl-sn-glyceryl-L-cysteinyl-[prolipoprotein] + sn-glycerol 1-phosphate + H(+). Its pathway is protein modification; lipoprotein biosynthesis (diacylglyceryl transfer). Catalyzes the transfer of the diacylglyceryl group from phosphatidylglycerol to the sulfhydryl group of the N-terminal cysteine of a prolipoprotein, the first step in the formation of mature lipoproteins. The sequence is that of Phosphatidylglycerol--prolipoprotein diacylglyceryl transferase from Zymomonas mobilis subsp. mobilis (strain ATCC 31821 / ZM4 / CP4).